The primary structure comprises 137 residues: Nucleoside diphosphate kinase (137 aa).

ATP contacts are provided by lysine 9, phenylalanine 57, arginine 85, threonine 91, arginine 102, and asparagine 112. Histidine 115 serves as the catalytic Pros-phosphohistidine intermediate.

It belongs to the NDK family. In terms of assembly, homotetramer. Requires Mg(2+) as cofactor.

Its subcellular location is the cytoplasm. It catalyses the reaction a 2'-deoxyribonucleoside 5'-diphosphate + ATP = a 2'-deoxyribonucleoside 5'-triphosphate + ADP. The enzyme catalyses a ribonucleoside 5'-diphosphate + ATP = a ribonucleoside 5'-triphosphate + ADP. In terms of biological role, major role in the synthesis of nucleoside triphosphates other than ATP. The ATP gamma phosphate is transferred to the NDP beta phosphate via a ping-pong mechanism, using a phosphorylated active-site intermediate. This Sulfurimonas denitrificans (strain ATCC 33889 / DSM 1251) (Thiomicrospira denitrificans (strain ATCC 33889 / DSM 1251)) protein is Nucleoside diphosphate kinase.